The primary structure comprises 240 residues: Uridylate kinase (240 aa).

An ATP-binding site is contributed by 14–17 (KLSG). Residue Gly-56 participates in UMP binding. ATP is bound by residues Gly-57 and Arg-61. UMP is bound by residues Asp-76 and 137–144 (TGNPFFTT). 3 residues coordinate ATP: Thr-164, Tyr-170, and Asp-173.

Belongs to the UMP kinase family. As to quaternary structure, homohexamer.

The protein resides in the cytoplasm. The enzyme catalyses UMP + ATP = UDP + ADP. The protein operates within pyrimidine metabolism; CTP biosynthesis via de novo pathway; UDP from UMP (UMPK route): step 1/1. Inhibited by UTP. In terms of biological role, catalyzes the reversible phosphorylation of UMP to UDP. The polypeptide is Uridylate kinase (Acidovorax sp. (strain JS42)).